Reading from the N-terminus, the 103-residue chain is Co-chaperonin GroES (103 aa).

Belongs to the GroES chaperonin family. As to quaternary structure, heptamer of 7 subunits arranged in a ring. Interacts with the chaperonin GroEL.

The protein localises to the cytoplasm. Its function is as follows. Together with the chaperonin GroEL, plays an essential role in assisting protein folding. The GroEL-GroES system forms a nano-cage that allows encapsulation of the non-native substrate proteins and provides a physical environment optimized to promote and accelerate protein folding. GroES binds to the apical surface of the GroEL ring, thereby capping the opening of the GroEL channel. This Parasynechococcus marenigrum (strain WH8102) protein is Co-chaperonin GroES.